Reading from the N-terminus, the 142-residue chain is Hemoglobin subunit alpha (142 aa).

The Globin domain maps to 2–142 (VLSPTDKSNV…VSTVLTSKYR (141 aa)). S4 is modified (phosphoserine). Residues K8 and K12 each carry the N6-succinyllysine modification. K17 carries the N6-acetyllysine; alternate modification. K17 carries the N6-succinyllysine; alternate modification. A Phosphotyrosine modification is found at Y25. N6-succinyllysine is present on K41. Position 59 (H59) interacts with O2. H88 is a heme b binding site. The residue at position 103 (S103) is a Phosphoserine. T109 carries the phosphothreonine modification. S125 and S132 each carry phosphoserine. Phosphothreonine is present on residues T135 and T138. S139 is subject to Phosphoserine.

The protein belongs to the globin family. In terms of assembly, heterotetramer of two alpha chains and two beta chains. In terms of tissue distribution, red blood cells.

Functionally, involved in oxygen transport from the lung to the various peripheral tissues. Hemopressin acts as an antagonist peptide of the cannabinoid receptor CNR1. Hemopressin-binding efficiently blocks cannabinoid receptor CNR1 and subsequent signaling. The sequence is that of Hemoglobin subunit alpha (HBA) from Balaenoptera acutorostrata (Common minke whale).